The sequence spans 237 residues: Large ribosomal subunit protein uL1 (237 aa).

It belongs to the universal ribosomal protein uL1 family. Part of the 50S ribosomal subunit.

Its function is as follows. Binds directly to 23S rRNA. The L1 stalk is quite mobile in the ribosome, and is involved in E site tRNA release. Protein L1 is also a translational repressor protein, it controls the translation of the L11 operon by binding to its mRNA. The protein is Large ribosomal subunit protein uL1 of Chloroflexus aurantiacus (strain ATCC 29364 / DSM 637 / Y-400-fl).